Consider the following 377-residue polypeptide: Sodium-dependent organic anion transporter (377 aa).

The Extracellular segment spans residues 1 to 29 (MRANCSSGLACPANSSEEELPEGLKAFGN). Asparagine 4 is a glycosylation site (N-linked (GlcNAc...) asparagine). The helical transmembrane segment at 30–50 (LDLVFTVVSALMIGLLMFSLG) threads the bilayer. The Cytoplasmic segment spans residues 51 to 67 (CSVEVQKLWGHIRRPWG). A helical transmembrane segment spans residues 68 to 88 (IAVGMLCQFGLMPLIAYLLII). The Extracellular portion of the chain corresponds to 89-97 (SFSLKPLQA). A helical transmembrane segment spans residues 98–118 (IAVLIMGCCPGGTVSNIFTFW). Over 119 to 133 (VDGDMDLSISMTTCS) the chain is Cytoplasmic. A helical transmembrane segment spans residues 134–154 (TMAALGMMPLCLYLYTLSWNL). The Extracellular portion of the chain corresponds to 155–159 (EQNLT). The N-linked (GlcNAc...) asparagine glycan is linked to asparagine 157. Residues 160-180 (IPYQNIGITLVCLIIPVAFGI) traverse the membrane as a helical segment. At 181 to 195 (YVNYRWPKQSKIILK) the chain is on the cytoplasmic side. The chain crosses the membrane as a helical span at residues 196-216 (IGAIAGGLLFLVVTGAGMVLM). Residues 217-223 (KEFWSSD) are Extracellular-facing. Residues 224–244 (IILLMISFIFPLIGHATGFLL) traverse the membrane as a helical segment. Residues 245–257 (ALLTHQSWQRCRT) are Cytoplasmic-facing. The chain crosses the membrane as a helical span at residues 258–278 (ISLETGTQNVQMCFTMLQLSF). Residues 279-285 (TAEQLVQ) are Extracellular-facing. The helical transmembrane segment at 286–306 (IFGFVLAYGLFQMLNGFFMVA) threads the bilayer. Residues 307 to 377 (AYKMYKRRLK…TPTGDIARAK (71 aa)) lie on the Cytoplasmic side of the membrane. Residues 319 to 377 (HGNEKPSCQEARHRKKSTSPKETTAFLEVNEEATLSPGPSGPVDPHGAPTPTGDIARAK) form a disordered region.

It belongs to the bile acid:sodium symporter (BASS) (TC 2.A.28) family. In terms of processing, glycosylated.

Its subcellular location is the membrane. It catalyses the reaction estrone 3-sulfate(out) + 2 Na(+)(out) = estrone 3-sulfate(in) + 2 Na(+)(in). The enzyme catalyses 17beta-estradiol 3-sulfate(out) + 2 Na(+)(out) = 17beta-estradiol 3-sulfate(in) + 2 Na(+)(in). The catalysed reaction is dehydroepiandrosterone 3-sulfate(out) + 2 Na(+)(out) = dehydroepiandrosterone 3-sulfate(in) + 2 Na(+)(in). It carries out the reaction androst-5-ene-diol 3-sulfate(out) + 2 Na(+)(out) = androst-5-ene-diol 3-sulfate(in) + 2 Na(+)(in). It catalyses the reaction pregnenolone sulfate(out) + 2 Na(+)(out) = pregnenolone sulfate(in) + 2 Na(+)(in). The enzyme catalyses taurolithocholate 3-sulfate(out) + 2 Na(+)(out) = taurolithocholate 3-sulfate(in) + 2 Na(+)(in). The catalysed reaction is androsterone 3alpha-sulfate(out) + 2 Na(+)(out) = androsterone 3alpha-sulfate(in) + 2 Na(+)(in). It carries out the reaction 5alpha-dihydrotestosterone sulfate(out) + 2 Na(+)(out) = 5alpha-dihydrotestosterone sulfate(in) + 2 Na(+)(in). It catalyses the reaction 17beta-estradiol 17-sulfate(out) + 2 Na(+)(out) = 17beta-estradiol 17-sulfate(in) + 2 Na(+)(in). The enzyme catalyses 17alpha-hydroxypregnenolone 3-sulfate(out) + 2 Na(+)(out) = 17alpha-hydroxypregnenolone 3-sulfate(in) + 2 Na(+)(in). The catalysed reaction is epiandrosterone 3-sulfate(out) + 2 Na(+)(out) = epiandrosterone 3-sulfate(in) + 2 Na(+)(in). It carries out the reaction epitestosterone 17-sulfate(out) + 2 Na(+)(out) = epitestosterone 17-sulfate(in) + 2 Na(+)(in). It catalyses the reaction testosterone 17-sulfate(out) + 2 Na(+)(out) = testosterone 17-sulfate(in) + 2 Na(+)(in). The enzyme catalyses 16alpha-hydroxydehydroepiandrosterone 3-sulfate(out) + 2 Na(+)(out) = 16alpha-hydroxydehydroepiandrosterone 3-sulfate(in) + 2 Na(+)(in). In terms of biological role, transports sulfoconjugated steroid hormones from the extracellular compartment into the cytosol in a sodium-dependent manner without hydrolysis. Steroid sulfate hormones are commonly considered to be biologically inactive metabolites, that may be activated by steroid sulfatases into free steroids. May play an important role by delivering sulfoconjugated steroids to specific target cells in reproductive organs. May play a role transporting the estriol precursor 16alpha-hydroxydehydroepiandrosterone 3-sulfate (16a-OH-DHEAS) at the fetal blood vessel endothelium. Can also transport other sulfoconjugated molecules such as taurolithocholic acid-3-sulfate and sulfoconjugated pyrenes. This is Sodium-dependent organic anion transporter (SLC10A6) from Bos taurus (Bovine).